We begin with the raw amino-acid sequence, 236 residues long: Large ribosomal subunit protein eL6 (236 aa).

This sequence belongs to the eukaryotic ribosomal protein eL6 family.

The chain is Large ribosomal subunit protein eL6 (rpl6) from Dictyostelium discoideum (Social amoeba).